The following is a 384-amino-acid chain: F-box only protein 5 (384 aa).

The disordered stretch occupies residues 25–67; the sequence is EVKGHKVSPRKTGALSLRSPAATNVSTPLESRSKGPHNKENYQ. The span at 45–54 shows a compositional bias: polar residues; it reads AATNVSTPLE. Residues 55-67 show a composition bias toward basic and acidic residues; it reads SRSKGPHNKENYQ. In terms of domain architecture, F-box spans 187-234; that stretch reads CKLMRKDMRHILARILGLLGDCDLISCTKVSRTWRKIICQDQLALQRW. Residues 311 to 359 form a ZBR-type zinc finger; sequence SLRRCSRCSSPARFDAVMQRAVCTRISCAFEFCTLCQSAFHDSTPCRNT. The Zn(2+) site is built by C315, C318, C333, C338, C343, C346, H351, and C356.

As to quaternary structure, part of a SCF (SKP1-cullin-F-box) protein ligase complex.

Its subcellular location is the nucleus. It localises to the cytoplasm. It participates in protein modification; protein ubiquitination. During embryonic development, regulates the integrity of the genome and therefore the cell cycle progression by preventing rereplication through an APC-Cdh1-dependent mechanism. The polypeptide is F-box only protein 5 (Danio rerio (Zebrafish)).